A 543-amino-acid polypeptide reads, in one-letter code: UBP9-binding protein bun62 (543 aa).

Ser43 carries the post-translational modification Phosphoserine. WD repeat units lie at residues 239-279 (LNSS…QPLH), 320-361 (FSKS…DVFH), 362-401 (SYFA…LVAR), 404-448 (GHKS…IHRP), and 513-542 (VDDS…TWQR).

Interacts with ubp9 and bun107.

It is found in the nucleus. The protein resides in the cytoplasm. It localises to the cell tip. In terms of biological role, required for the ubp9 recruitment to septa and cell tips but also for its enzymatic activity at these specific locations. The chain is UBP9-binding protein bun62 (bun62) from Schizosaccharomyces pombe (strain 972 / ATCC 24843) (Fission yeast).